A 155-amino-acid polypeptide reads, in one-letter code: Aspartate 1-decarboxylase (155 aa).

Ser24 serves as the catalytic Schiff-base intermediate with substrate; via pyruvic acid. Ser24 carries the pyruvic acid (Ser) modification. Position 56 (Thr56) interacts with substrate. Tyr57 acts as the Proton donor in catalysis. Substrate is bound at residue 72–74 (GAA).

It belongs to the PanD family. Heterooctamer of four alpha and four beta subunits. Requires pyruvate as cofactor. Is synthesized initially as an inactive proenzyme, which is activated by self-cleavage at a specific serine bond to produce a beta-subunit with a hydroxyl group at its C-terminus and an alpha-subunit with a pyruvoyl group at its N-terminus.

The protein localises to the cytoplasm. It carries out the reaction L-aspartate + H(+) = beta-alanine + CO2. It participates in cofactor biosynthesis; (R)-pantothenate biosynthesis; beta-alanine from L-aspartate: step 1/1. Its function is as follows. Catalyzes the pyruvoyl-dependent decarboxylation of aspartate to produce beta-alanine. The sequence is that of Aspartate 1-decarboxylase from Methylocella silvestris (strain DSM 15510 / CIP 108128 / LMG 27833 / NCIMB 13906 / BL2).